The primary structure comprises 318 residues: Pyrimidine-specific ribonucleoside hydrolase RihA (318 aa).

Residue H240 is part of the active site.

This sequence belongs to the IUNH family. RihA subfamily.

Functionally, hydrolyzes cytidine or uridine to ribose and cytosine or uracil, respectively. In Shewanella baltica (strain OS155 / ATCC BAA-1091), this protein is Pyrimidine-specific ribonucleoside hydrolase RihA.